A 311-amino-acid polypeptide reads, in one-letter code: Methionyl-tRNA formyltransferase (311 aa).

110-113 contacts (6S)-5,6,7,8-tetrahydrofolate; the sequence is SLLP.

The protein belongs to the Fmt family.

It catalyses the reaction L-methionyl-tRNA(fMet) + (6R)-10-formyltetrahydrofolate = N-formyl-L-methionyl-tRNA(fMet) + (6S)-5,6,7,8-tetrahydrofolate + H(+). Functionally, attaches a formyl group to the free amino group of methionyl-tRNA(fMet). The formyl group appears to play a dual role in the initiator identity of N-formylmethionyl-tRNA by promoting its recognition by IF2 and preventing the misappropriation of this tRNA by the elongation apparatus. The chain is Methionyl-tRNA formyltransferase from Streptococcus pyogenes serotype M2 (strain MGAS10270).